The following is a 281-amino-acid chain: Fructose-bisphosphate aldolase class 1 (281 aa).

Catalysis depends on lysine 191, which acts as the Schiff-base intermediate with dihydroxyacetone-P.

Belongs to the DeoC/FbaB aldolase family. In terms of assembly, homooctamer.

It is found in the cytoplasm. It carries out the reaction beta-D-fructose 1,6-bisphosphate = D-glyceraldehyde 3-phosphate + dihydroxyacetone phosphate. Its activity is regulated as follows. Activated by citrate. This Pyrococcus furiosus (strain ATCC 43587 / DSM 3638 / JCM 8422 / Vc1) protein is Fructose-bisphosphate aldolase class 1 (fba).